Consider the following 304-residue polypeptide: Germ cell-specific gene 1-like protein (304 aa).

Over 1–8 the chain is Cytoplasmic; that stretch reads MKTTRKCR. The chain crosses the membrane as a helical span at residues 9-29; that stretch reads ALLSVGLNLLALLFSTTAFIT. Residues 30–112 lie on the Extracellular side of the membrane; sequence TYWCEGTQRV…FIDLAPASER (83 aa). The helical transmembrane segment at 113–133 threads the bilayer; the sequence is GVLWLSVVSEVLYIMLLVVGF. Topologically, residues 134 to 153 are cytoplasmic; the sequence is SLMCLELFHSSNVIDGLKLN. A helical transmembrane segment spans residues 154 to 174; that stretch reads AFAAVFTVLSGLLGMVAHMMY. The Extracellular segment spans residues 175 to 197; sequence TQVFQITVSLGPEDWRPHTWDYG. Residues 198–218 traverse the membrane as a helical segment; the sequence is WSFCMAWGSFTCCMAASVTTL. The Cytoplasmic portion of the chain corresponds to 219–304; the sequence is NSYTKTVIEF…NTESLGEEQC (86 aa). Residues 266 to 278 show a composition bias toward polar residues; that stretch reads VDVYPSHGSSHGN. Residues 266 to 304 form a disordered region; that stretch reads VDVYPSHGSSHGNSRGKMRSPPAPVDQGDNTESLGEEQC.

This sequence belongs to the GSG1 family. As to quaternary structure, component of the AMPAR complex.

The protein localises to the cell membrane. The protein resides in the synapse. As a component of the AMPAR complex, modifies AMPA receptor (AMPAR) gating. The protein is Germ cell-specific gene 1-like protein (gsg1l) of Danio rerio (Zebrafish).